We begin with the raw amino-acid sequence, 213 residues long: Kynurenine formamidase (213 aa).

Substrate is bound at residue W18. Zn(2+) contacts are provided by H48, H52, and D54. H58 functions as the Proton donor/acceptor in the catalytic mechanism. Residues H160 and E172 each coordinate Zn(2+).

The protein belongs to the Cyclase 1 superfamily. KynB family. In terms of assembly, homodimer. It depends on Zn(2+) as a cofactor.

It carries out the reaction N-formyl-L-kynurenine + H2O = L-kynurenine + formate + H(+). It participates in amino-acid degradation; L-tryptophan degradation via kynurenine pathway; L-kynurenine from L-tryptophan: step 2/2. In terms of biological role, catalyzes the hydrolysis of N-formyl-L-kynurenine to L-kynurenine, the second step in the kynurenine pathway of tryptophan degradation. The polypeptide is Kynurenine formamidase (Burkholderia pseudomallei (strain 668)).